We begin with the raw amino-acid sequence, 236 residues long: Chorionic somatomammotropin hormone 1 (236 aa).

The N-terminal stretch at 1–36 (MAPASSHRGHQWICDLVRGSCLLLLLVVSNLLLCQG) is a signal peptide. The N-linked (GlcNAc...) asparagine glycan is linked to Asn89. 2 disulfide bridges follow: Cys98-Cys214 and Cys231-Cys236.

This sequence belongs to the somatotropin/prolactin family.

The protein localises to the secreted. The polypeptide is Chorionic somatomammotropin hormone 1 (CSH1) (Bos taurus (Bovine)).